The chain runs to 843 residues: Molybdenum cofactor sulfurase (843 aa).

At Lys241 the chain carries N6-(pyridoxal phosphate)lysine. The active site involves Cys405. Residues 657–836 (QYLRKFVMPG…LMVGDIVIPS (180 aa)) form the MOSC domain.

The protein belongs to the class-V pyridoxal-phosphate-dependent aminotransferase family. MOCOS subfamily. It depends on pyridoxal 5'-phosphate as a cofactor.

The catalysed reaction is Mo-molybdopterin + L-cysteine + AH2 = thio-Mo-molybdopterin + L-alanine + A + H2O. In terms of biological role, sulfurates the molybdenum cofactor. Sulfation of molybdenum is essential for xanthine dehydrogenase (XDH) and aldehyde oxidase (ADO) enzymes in which molybdenum cofactor is liganded by 1 oxygen and 1 sulfur atom in active form. The sequence is that of Molybdenum cofactor sulfurase from Aspergillus fumigatus (strain CBS 144.89 / FGSC A1163 / CEA10) (Neosartorya fumigata).